A 96-amino-acid chain; its full sequence is uncharacterized protein (96 aa).

This is an uncharacterized protein from Homo sapiens (Human).